The sequence spans 553 residues: Fusion glycoprotein F0 (553 aa).

The signal sequence occupies residues 1-31 (MASRSSTRIPAPLMLTIWIALALGCVRLTSS). At 32–500 (LDGRPLAAAG…VNVRLTNTSA (469 aa)) the chain is on the extracellular side. Disulfide bonds link Cys76-Cys199, Cys338-Cys347, Cys362-Cys370, Cys394-Cys399, and Cys401-Cys424. Asn85 carries an N-linked (GlcNAc...) asparagine; by host glycan. Residues 117–141 (FIGAIIGSVALGVATAAQITAASAL) form a fusion peptide region. The stretch at 142–170 (IQANQNAANILRLKESIAATNEAVHEVTD) forms a coiled coil. N-linked (GlcNAc...) asparagine; by host glycosylation is found at Asn191 and Asn192. Asn366 is a glycosylation site (N-linked (GlcNAc...) asparagine; by host). Asn447 and Asn471 each carry an N-linked (GlcNAc...) asparagine; by host glycan. A coiled-coil region spans residues 466–491 (ELGNANNSISNALNKLEESNSKLDKV). The helical transmembrane segment at 501–521 (LITYIVLTVISLVCGILSLVL) threads the bilayer. The Cytoplasmic portion of the chain corresponds to 522–553 (ACYLMHKQKAQQKTLLWLGNNTLDQMRATTKA). Cys523 carries S-palmitoyl cysteine; by host lipidation.

The protein belongs to the paramyxoviruses fusion glycoprotein family. In terms of assembly, homotrimer of disulfide-linked F1-F2. Post-translationally, the inactive precursor F0 is glycosylated and proteolytically cleaved into F1 and F2 to be functionally active. The cleavage is mediated by cellular proteases during the transport and maturation of the polypeptide.

It localises to the virion membrane. Its subcellular location is the host cell membrane. Class I viral fusion protein. Under the current model, the protein has at least 3 conformational states: pre-fusion native state, pre-hairpin intermediate state, and post-fusion hairpin state. During viral and plasma cell membrane fusion, the heptad repeat (HR) regions assume a trimer-of-hairpins structure, positioning the fusion peptide in close proximity to the C-terminal region of the ectodomain. The formation of this structure appears to drive apposition and subsequent fusion of viral and plasma cell membranes. Directs fusion of viral and cellular membranes leading to delivery of the nucleocapsid into the cytoplasm. This fusion is pH independent and occurs directly at the outer cell membrane. The trimer of F1-F2 (F protein) probably interacts with HN at the virion surface. Upon HN binding to its cellular receptor, the hydrophobic fusion peptide is unmasked and interacts with the cellular membrane, inducing the fusion between cell and virion membranes. Later in infection, F proteins expressed at the plasma membrane of infected cells could mediate fusion with adjacent cells to form syncytia, a cytopathic effect that could lead to tissue necrosis. This chain is Fusion glycoprotein F0 (F), found in Gallus gallus (Chicken).